A 435-amino-acid chain; its full sequence is Bifunctional protein GlmU (435 aa).

Residues 1-224 (MNDTSIIILA…EQNFMGINDK (224 aa)) form a pyrophosphorylase region. Residues 9–12 (LAAG), lysine 23, glutamine 75, and 82–83 (GT) each bind UDP-N-acetyl-alpha-D-glucosamine. Aspartate 103 contacts Mg(2+). 4 residues coordinate UDP-N-acetyl-alpha-D-glucosamine: glycine 136, glutamate 150, asparagine 165, and asparagine 222. Asparagine 222 serves as a coordination point for Mg(2+). Positions 225-245 (FQLSVAEKIMQDEIKQDLMKA) are linker. The N-acetyltransferase stretch occupies residues 246-435 (GVLMRLPESI…KFFGKNNAEK (190 aa)). Residues arginine 309 and lysine 326 each contribute to the UDP-N-acetyl-alpha-D-glucosamine site. The active-site Proton acceptor is the histidine 337. Positions 340 and 351 each coordinate UDP-N-acetyl-alpha-D-glucosamine. Residues 360–361 (NY), serine 379, alanine 397, and arginine 414 each bind acetyl-CoA.

In the N-terminal section; belongs to the N-acetylglucosamine-1-phosphate uridyltransferase family. This sequence in the C-terminal section; belongs to the transferase hexapeptide repeat family. Homotrimer. Requires Mg(2+) as cofactor.

The protein localises to the cytoplasm. It catalyses the reaction alpha-D-glucosamine 1-phosphate + acetyl-CoA = N-acetyl-alpha-D-glucosamine 1-phosphate + CoA + H(+). The enzyme catalyses N-acetyl-alpha-D-glucosamine 1-phosphate + UTP + H(+) = UDP-N-acetyl-alpha-D-glucosamine + diphosphate. Its pathway is nucleotide-sugar biosynthesis; UDP-N-acetyl-alpha-D-glucosamine biosynthesis; N-acetyl-alpha-D-glucosamine 1-phosphate from alpha-D-glucosamine 6-phosphate (route II): step 2/2. It functions in the pathway nucleotide-sugar biosynthesis; UDP-N-acetyl-alpha-D-glucosamine biosynthesis; UDP-N-acetyl-alpha-D-glucosamine from N-acetyl-alpha-D-glucosamine 1-phosphate: step 1/1. It participates in bacterial outer membrane biogenesis; LPS lipid A biosynthesis. Functionally, catalyzes the last two sequential reactions in the de novo biosynthetic pathway for UDP-N-acetylglucosamine (UDP-GlcNAc). The C-terminal domain catalyzes the transfer of acetyl group from acetyl coenzyme A to glucosamine-1-phosphate (GlcN-1-P) to produce N-acetylglucosamine-1-phosphate (GlcNAc-1-P), which is converted into UDP-GlcNAc by the transfer of uridine 5-monophosphate (from uridine 5-triphosphate), a reaction catalyzed by the N-terminal domain. The protein is Bifunctional protein GlmU of Campylobacter curvus (strain 525.92).